We begin with the raw amino-acid sequence, 2283 residues long: DNA polymerase epsilon catalytic subunit A (2283 aa).

The tract at residues 1–32 (MVLRNSGRRHPEPGADGEGSRDDGPSSSVSAL) is disordered. The span at 9–24 (RHPEPGADGEGSRDDG) shows a compositional bias: basic and acidic residues. Phosphoserine is present on residues S1184, S1296, and S1316. Disordered regions lie at residues 1935-1968 (GQVKEQDSQAREETDEEEEDKEKDEEEEGMGESE) and 2014-2041 (HSAPGSTPVKRKGASQFSQESEGATGSL). The segment covering 1936-1946 (QVKEQDSQARE) has biased composition (basic and acidic residues). The segment covering 1947-1968 (ETDEEEEDKEKDEEEEGMGESE) has biased composition (acidic residues). Polar residues predominate over residues 2028–2037 (SQFSQESEGA). Zn(2+) contacts are provided by C2155, C2158, C2184, and C2187. The CysA-type zinc finger occupies 2155-2187 (CHSCNFCRDLDLCKDSSFSQDGAILPQWLCSNC). Residues C2218, C2221, C2233, and C2235 each contribute to the [4Fe-4S] cluster site. The short motif at 2218 to 2235 (CLKCRGMKETHMPVYCSC) is the CysB motif element.

It belongs to the DNA polymerase type-B family. In terms of assembly, component of the DNA polymerase epsilon complex consisting of four subunits: the catalytic subunit POLE and the accessory subunits POLE2, POLE3 and POLE4. Interacts with RAD17 and TOPBP1. The cofactor is [4Fe-4S] cluster.

The protein resides in the nucleus. The enzyme catalyses DNA(n) + a 2'-deoxyribonucleoside 5'-triphosphate = DNA(n+1) + diphosphate. Catalytic component of the DNA polymerase epsilon complex. Participates in chromosomal DNA replication. Required during synthesis of the leading DNA strands at the replication fork and binds at/or near replication origins and moves along DNA with the replication fork. Has 3'-5' proofreading exonuclease activity that corrects errors arising during DNA replication. It is also involved in DNA synthesis during DNA repair. The sequence is that of DNA polymerase epsilon catalytic subunit A (Pole) from Mus musculus (Mouse).